We begin with the raw amino-acid sequence, 339 residues long: O-methyltransferase 7 (339 aa).

S-adenosyl-L-methionine-binding residues include Gly186, Asp209, Ser232, Phe233, and Lys246. The active-site Proton acceptor is His250.

It belongs to the class I-like SAM-binding methyltransferase superfamily. Cation-independent O-methyltransferase family. COMT subfamily.

It carries out the reaction (3,5-dichloro-2,4,6-trihydroxyphenyl)hexan-1-one + S-adenosyl-L-methionine = 1-(3,5-dichloro-2,6-dihydroxy-4-methoxyphenyl)hexan-1-one + S-adenosyl-L-homocysteine + H(+). The protein is O-methyltransferase 7 (omt7) of Dictyostelium discoideum (Social amoeba).